The primary structure comprises 303 residues: DDRGK domain-containing protein 1 (303 aa).

The Lumenal segment spans residues 1 to 2; it reads MD. A helical transmembrane segment spans residues 3-23; that stretch reads LILLIGIATALLIILLTLYFL. At 24–303 the chain is on the cytoplasmic side; that stretch reads QKRNAPAETK…TPVTASEGGA (280 aa). Disordered regions lie at residues 31-53 and 84-160; these read ETKA…VPRR and AIDP…AEVE. A compositionally biased stretch (basic and acidic residues) spans 106 to 160; the sequence is LDEKMGAKKRAKMEAKEQKRLQREQELHDREQRKVKEAKEEAERKQQDDLDAEVE.

Belongs to the DDRGK1 family. In terms of assembly, interacts with Atg9; the interaction is transient.

The protein resides in the endoplasmic reticulum membrane. Substrate adapter for ufmylation, the covalent attachment of the ubiquitin-like modifier UFM1 to substrate proteins. Required for ufmylation of Atg9; protects the nervous system during aging, possibly by stabilizing Atg9 and supporting its function. In Drosophila grimshawi (Hawaiian fruit fly), this protein is DDRGK domain-containing protein 1.